Here is a 217-residue protein sequence, read N- to C-terminus: Octanoyltransferase (217 aa).

The BPL/LPL catalytic domain maps to 31 to 206 (KSVMDEAWLL…ELVSRLGYAE (176 aa)). Substrate-binding positions include 70–77 (RGGQVTYH), 137–139 (SLG), and 150–152 (GLA). C168 functions as the Acyl-thioester intermediate in the catalytic mechanism.

The protein belongs to the LipB family.

The protein resides in the cytoplasm. The catalysed reaction is octanoyl-[ACP] + L-lysyl-[protein] = N(6)-octanoyl-L-lysyl-[protein] + holo-[ACP] + H(+). It functions in the pathway protein modification; protein lipoylation via endogenous pathway; protein N(6)-(lipoyl)lysine from octanoyl-[acyl-carrier-protein]: step 1/2. Catalyzes the transfer of endogenously produced octanoic acid from octanoyl-acyl-carrier-protein onto the lipoyl domains of lipoate-dependent enzymes. Lipoyl-ACP can also act as a substrate although octanoyl-ACP is likely to be the physiological substrate. This is Octanoyltransferase from Pseudomonas aeruginosa (strain UCBPP-PA14).